Reading from the N-terminus, the 360-residue chain is 3-dehydroquinate synthase (360 aa).

NAD(+) is bound by residues 70 to 75 (DGEKYK), 104 to 108 (GVIGD), 128 to 129 (TT), Lys-141, and Lys-150. Glu-183, His-246, and His-263 together coordinate Zn(2+).

It belongs to the sugar phosphate cyclases superfamily. Dehydroquinate synthase family. The cofactor is Co(2+). It depends on Zn(2+) as a cofactor. NAD(+) is required as a cofactor.

Its subcellular location is the cytoplasm. It carries out the reaction 7-phospho-2-dehydro-3-deoxy-D-arabino-heptonate = 3-dehydroquinate + phosphate. It participates in metabolic intermediate biosynthesis; chorismate biosynthesis; chorismate from D-erythrose 4-phosphate and phosphoenolpyruvate: step 2/7. In terms of biological role, catalyzes the conversion of 3-deoxy-D-arabino-heptulosonate 7-phosphate (DAHP) to dehydroquinate (DHQ). This is 3-dehydroquinate synthase from Acinetobacter baumannii (strain AYE).